The following is a 437-amino-acid chain: Branched-chain amino acid transport system 2 carrier protein (437 aa).

A run of 12 helical transmembrane segments spans residues 9–29 (LLAL…IIFP), 43–63 (AAFG…VALA), 80–100 (AGVA…ATPR), 117–137 (GGVP…FLVL), 149–169 (VITP…IFAP), 192–212 (GYLT…ATAI), 228–248 (MIAG…LFYL), 280–300 (LLLA…LITA), 308–328 (LLPV…LLVA), 335–355 (LISL…VLIA), 369–389 (VFVP…LGAA), and 404–424 (LADQ…LAVV).

It belongs to the branched chain amino acid transporter family.

Its subcellular location is the cell inner membrane. Component of the LIV-II transport system for branched-chain amino acids. BraB is specific for isoleucine, leucine and valine. The LIV-II transport system is coupled to sodium and lithium ions. In Pseudomonas aeruginosa (strain ATCC 15692 / DSM 22644 / CIP 104116 / JCM 14847 / LMG 12228 / 1C / PRS 101 / PAO1), this protein is Branched-chain amino acid transport system 2 carrier protein (braB).